Here is a 1383-residue protein sequence, read N- to C-terminus: DNA-directed RNA polymerase subunit beta (1383 aa).

It belongs to the RNA polymerase beta chain family. As to quaternary structure, the RNAP catalytic core consists of 2 alpha, 1 beta, 1 beta' and 1 omega subunit. When a sigma factor is associated with the core the holoenzyme is formed, which can initiate transcription.

The enzyme catalyses RNA(n) + a ribonucleoside 5'-triphosphate = RNA(n+1) + diphosphate. Its function is as follows. DNA-dependent RNA polymerase catalyzes the transcription of DNA into RNA using the four ribonucleoside triphosphates as substrates. This is DNA-directed RNA polymerase subunit beta from Xanthomonas oryzae pv. oryzae (strain MAFF 311018).